The chain runs to 620 residues: MTSSQDACYISLLGLAEYFRTSSPPNIKKCIQCLQALFTFKPPLKVEARTHLQLGQILMAYTKNTDLARNHLEQAWMLSENINNFDDVKFDTASLLAQLYQQQEQSSLAKPVLRKAIELSQHNVYWHCKLLFQLAQTHATDKEYALASELLAVGVESTDETNATYLKTLFLLSRAMIMMIERKTGDVLTILNQAGTMIDNAVQNIHLKEYLKVFFYVLQVCHYLQLGQVKTVKTSLKQLQQSIQTIMAPNWPADEQIFGQSNTEMFMWLPKEQLYVLVYLVTVSHSMMAGYMDKAQKYTEKALTQIEKLKSQENKPILAVFQIILLEHIIMCRLVMGNKSLAIKEIALAKDVCLSSSNKFLLKKHSAQLHCLLGLYAMSASYFEHAERQFFACINDTTERDLKLFANLNLAIVYLRMKREQELRQILDQVQQENSQCSNSQALMGSFYYVQGLNAFHKSSFHEAKRFLRETLKMANAEDLNRLTSCSLVLLSHVFLSIGNSKESMNMVTPAMQLASKIPDIHVQLWGSAILKDLHRMLKEPALETEAYNNHCNFSQNLIADQMKCTKFPEHTLISWVQGDPPLPMLSQEILEAPPAATIQQQSATVVRLSGQPGQQVIYQ.

3 TPR repeats span residues 90–123 (FDTA…SQHN), 445–478 (GSFY…ANAE), and 485–518 (SCSL…ASKI).

The protein belongs to the SCC4/mau-2 family. Component of the cohesin loading complex.

The protein resides in the nucleus. Its subcellular location is the nucleoplasm. Required for association of the cohesin complex with chromatin during interphase. Plays a role in sister chromatid cohesion and normal progression through prometaphase. In Aedes aegypti (Yellowfever mosquito), this protein is MAU2 chromatid cohesion factor homolog.